The chain runs to 547 residues: Putative HMP/thiamine import ATP-binding protein YkoD (547 aa).

ABC transporter domains are found at residues Leu8 to Ile250 and Leu295 to Leu523. ATP-binding positions include Gly42–Ser49 and Gly327–Ser334.

It belongs to the ABC transporter superfamily. The complex is composed of two ATP-binding proteins (YkoD), two transmembrane proteins (YkoC and YkoE) and a solute-binding protein (YkoF).

It localises to the cell membrane. Functionally, part of the ABC transporter complex YkoCDEF that could transport hydroxymethylpyrimidine (HMP) and/or thiamine. Could also transport other HMP-containing products. Responsible for energy coupling to the transport system. This is Putative HMP/thiamine import ATP-binding protein YkoD (ykoD) from Bacillus subtilis (strain 168).